The following is a 425-amino-acid chain: Histidine--tRNA ligase (425 aa).

Belongs to the class-II aminoacyl-tRNA synthetase family. Homodimer.

The protein resides in the cytoplasm. The catalysed reaction is tRNA(His) + L-histidine + ATP = L-histidyl-tRNA(His) + AMP + diphosphate + H(+). The polypeptide is Histidine--tRNA ligase (Listeria monocytogenes serovar 1/2a (strain ATCC BAA-679 / EGD-e)).